The sequence spans 182 residues: pEARLI1-like lipid transfer protein 2 (182 aa).

The N-terminal stretch at 1–25 is a signal peptide; that stretch reads MASKNSASLALFFALNILFFTLTAG. The segment covering 33 to 92 has biased composition (pro residues); the sequence is SPKPRPLPNPKVPSPKVPTPSVPSPYVPTPSVPSPSVPTPSVPSPSVPSPNPTPVIPPRT. The tract at residues 33–94 is disordered; that stretch reads SPKPRPLPNP…TPVIPPRTPG (62 aa). 7 tandem repeats follow at residues 42-46, 47-51, 52-56, 62-66, 67-71, 72-76, and 77-81. The interval 42–81 is 7 X 5 AA repeats of P-[KS]-V-P-[ST]; sequence PKVPSPKVPTPSVPSPYVPTPSVPSPSVPTPSVPSPSVPS.

Belongs to the plant LTP family. PEARLI1 subfamily.

It localises to the secreted. Its subcellular location is the cell wall. In terms of biological role, probable lipid transfer protein (LTP). May improve freezing survival. Seems to control the flowering process and lignin synthesis. Confers resistance to Botrytis cinerea. This is pEARLI1-like lipid transfer protein 2 from Arabidopsis thaliana (Mouse-ear cress).